A 600-amino-acid chain; its full sequence is Proline--tRNA ligase (600 aa).

Belongs to the class-II aminoacyl-tRNA synthetase family. ProS type 1 subfamily. As to quaternary structure, homodimer.

The protein localises to the cytoplasm. It carries out the reaction tRNA(Pro) + L-proline + ATP = L-prolyl-tRNA(Pro) + AMP + diphosphate. Functionally, catalyzes the attachment of proline to tRNA(Pro) in a two-step reaction: proline is first activated by ATP to form Pro-AMP and then transferred to the acceptor end of tRNA(Pro). As ProRS can inadvertently accommodate and process non-cognate amino acids such as alanine and cysteine, to avoid such errors it has two additional distinct editing activities against alanine. One activity is designated as 'pretransfer' editing and involves the tRNA(Pro)-independent hydrolysis of activated Ala-AMP. The other activity is designated 'posttransfer' editing and involves deacylation of mischarged Ala-tRNA(Pro). The misacylated Cys-tRNA(Pro) is not edited by ProRS. In Acaryochloris marina (strain MBIC 11017), this protein is Proline--tRNA ligase.